We begin with the raw amino-acid sequence, 245 residues long: tRNA1(Val) (adenine(37)-N6)-methyltransferase (245 aa).

The protein belongs to the methyltransferase superfamily. tRNA (adenine-N(6)-)-methyltransferase family.

The protein localises to the cytoplasm. It carries out the reaction adenosine(37) in tRNA1(Val) + S-adenosyl-L-methionine = N(6)-methyladenosine(37) in tRNA1(Val) + S-adenosyl-L-homocysteine + H(+). Its function is as follows. Specifically methylates the adenine in position 37 of tRNA(1)(Val) (anticodon cmo5UAC). The polypeptide is tRNA1(Val) (adenine(37)-N6)-methyltransferase (Salmonella arizonae (strain ATCC BAA-731 / CDC346-86 / RSK2980)).